The sequence spans 154 residues: Superoxide dismutase [Cu-Zn] (154 aa).

Cu cation contacts are provided by histidine 47, histidine 49, and histidine 64. A disulfide bridge connects residues cysteine 58 and cysteine 147. Residues histidine 64, histidine 72, histidine 81, and aspartate 84 each coordinate Zn(2+). A Cu cation-binding site is contributed by histidine 121.

This sequence belongs to the Cu-Zn superoxide dismutase family. As to quaternary structure, homodimer. Cu cation serves as cofactor. The cofactor is Zn(2+).

Its subcellular location is the cytoplasm. It catalyses the reaction 2 superoxide + 2 H(+) = H2O2 + O2. Destroys radicals which are normally produced within the cells and which are toxic to biological systems. In Pinus sylvestris (Scotch pine), this protein is Superoxide dismutase [Cu-Zn] (SODCC).